Here is a 502-residue protein sequence, read N- to C-terminus: Bifunctional purine biosynthesis protein PurH (502 aa).

The region spanning 1-144 (MKKRALISVF…KNFQDVVVIS (144 aa)) is the MGS-like domain.

This sequence belongs to the PurH family.

The enzyme catalyses (6R)-10-formyltetrahydrofolate + 5-amino-1-(5-phospho-beta-D-ribosyl)imidazole-4-carboxamide = 5-formamido-1-(5-phospho-D-ribosyl)imidazole-4-carboxamide + (6S)-5,6,7,8-tetrahydrofolate. The catalysed reaction is IMP + H2O = 5-formamido-1-(5-phospho-D-ribosyl)imidazole-4-carboxamide. Its pathway is purine metabolism; IMP biosynthesis via de novo pathway; 5-formamido-1-(5-phospho-D-ribosyl)imidazole-4-carboxamide from 5-amino-1-(5-phospho-D-ribosyl)imidazole-4-carboxamide (10-formyl THF route): step 1/1. It functions in the pathway purine metabolism; IMP biosynthesis via de novo pathway; IMP from 5-formamido-1-(5-phospho-D-ribosyl)imidazole-4-carboxamide: step 1/1. This chain is Bifunctional purine biosynthesis protein PurH, found in Clostridium beijerinckii (strain ATCC 51743 / NCIMB 8052) (Clostridium acetobutylicum).